The sequence spans 1105 residues: AP-3 complex subunit beta-1 (1105 aa).

Disordered regions lie at residues 1 to 26 (MSSN…EATS) and 271 to 292 (KNFY…KKSY). A phosphoserine mark is found at Ser-276 and Ser-610. The disordered stretch occupies residues 668-824 (KKEKPMKKFY…KPQQERHPPS (157 aa)). The span at 679–704 (ESEEEEDEDEDEDEEEEEKEDEDENP) shows a compositional bias: acidic residues. Low complexity-rich tracts occupy residues 705 to 722 (SDSS…SGDT) and 730 to 741 (DSSSGQDSETGS). Positions 750-759 (VAKRNSKTKR) are enriched in basic residues. Basic and acidic residues predominate over residues 760–774 (KSDSENREKKNENSK). Residues Ser-761 and Ser-763 each carry the phosphoserine modification. Residues 775-788 (ASESSSEESSSMED) show a composition bias toward low complexity. Acidic residues predominate over residues 789–799 (SSSESESESGS). The segment covering 811–824 (AKERKPQQERHPPS) has biased composition (basic and acidic residues).

The protein belongs to the adaptor complexes large subunit family. As to quaternary structure, adaptor protein complex 3 (AP-3) is a heterotetramer composed of two large adaptins (delta-type subunit AP3D1 and beta-type subunit AP3B1 or AP3B2), a medium adaptin (mu-type subunit AP3M1 or AP3M2) and a small adaptin (sigma-type subunit APS1 or AP3S2). AP-3 associates with the BLOC-1 complex. Interacts with KIF3A; interaction is direct; interaction is impaired by pyrophosphorylation of AP3B1. In terms of processing, phosphorylated on serine residues. Post-translationally, pyrophosphorylated by 5-diphosphoinositol pentakisphosphate (5-IP7). Pyrophosphorylation impairs interaction with KIF3A. Serine pyrophosphorylation is achieved by Mg(2+)-dependent, but enzyme independent transfer of a beta-phosphate from a inositol pyrophosphate to a pre-phosphorylated serine residue. Ubiquitously expressed.

Its subcellular location is the cytoplasmic vesicle. It is found in the clathrin-coated vesicle membrane. It localises to the golgi apparatus. Subunit of non-clathrin- and clathrin-associated adaptor protein complex 3 (AP-3) that plays a role in protein sorting in the late-Golgi/trans-Golgi network (TGN) and/or endosomes. The AP complexes mediate both the recruitment of clathrin to membranes and the recognition of sorting signals within the cytosolic tails of transmembrane cargo molecules. AP-3 appears to be involved in the sorting of a subset of transmembrane proteins targeted to lysosomes and lysosome-related organelles. In concert with the BLOC-1 complex, AP-3 is required to target cargos into vesicles assembled at cell bodies for delivery into neurites and nerve terminals. In Mus musculus (Mouse), this protein is AP-3 complex subunit beta-1 (Ap3b1).